The chain runs to 117 residues: UPF0342 protein LBUL_1430 (117 aa).

It belongs to the UPF0342 family.

In Lactobacillus delbrueckii subsp. bulgaricus (strain ATCC BAA-365 / Lb-18), this protein is UPF0342 protein LBUL_1430.